A 428-amino-acid chain; its full sequence is tRNA(Ile)-lysidine synthase (428 aa).

Residue 25 to 30 participates in ATP binding; that stretch reads SGGIDS.

Belongs to the tRNA(Ile)-lysidine synthase family.

Its subcellular location is the cytoplasm. It catalyses the reaction cytidine(34) in tRNA(Ile2) + L-lysine + ATP = lysidine(34) in tRNA(Ile2) + AMP + diphosphate + H(+). Its function is as follows. Ligates lysine onto the cytidine present at position 34 of the AUA codon-specific tRNA(Ile) that contains the anticodon CAU, in an ATP-dependent manner. Cytidine is converted to lysidine, thus changing the amino acid specificity of the tRNA from methionine to isoleucine. The sequence is that of tRNA(Ile)-lysidine synthase from Haemophilus ducreyi (strain 35000HP / ATCC 700724).